The sequence spans 68 residues: MKTITLNIKGIHCGCCVKSLTQVLTELDGVQSADVQLEGKANITFDENRVNVAQLIEVIEDAGFDATE.

Residues 2–67 enclose the HMA domain; it reads KTITLNIKGI…VIEDAGFDAT (66 aa). Residues C13 and C16 each contribute to the a metal cation site.

This is an uncharacterized protein from Haemophilus influenzae (strain ATCC 51907 / DSM 11121 / KW20 / Rd).